Consider the following 258-residue polypeptide: Leucyl/phenylalanyl-tRNA--protein transferase (258 aa).

Residues 199–220 (GGSDGPAPDQSIGMSSSGGVSD) are disordered. The segment covering 209-220 (SIGMSSSGGVSD) has biased composition (low complexity).

Belongs to the L/F-transferase family.

Its subcellular location is the cytoplasm. The catalysed reaction is N-terminal L-lysyl-[protein] + L-leucyl-tRNA(Leu) = N-terminal L-leucyl-L-lysyl-[protein] + tRNA(Leu) + H(+). It catalyses the reaction N-terminal L-arginyl-[protein] + L-leucyl-tRNA(Leu) = N-terminal L-leucyl-L-arginyl-[protein] + tRNA(Leu) + H(+). It carries out the reaction L-phenylalanyl-tRNA(Phe) + an N-terminal L-alpha-aminoacyl-[protein] = an N-terminal L-phenylalanyl-L-alpha-aminoacyl-[protein] + tRNA(Phe). Functionally, functions in the N-end rule pathway of protein degradation where it conjugates Leu, Phe and, less efficiently, Met from aminoacyl-tRNAs to the N-termini of proteins containing an N-terminal arginine or lysine. The polypeptide is Leucyl/phenylalanyl-tRNA--protein transferase (Hyphomonas neptunium (strain ATCC 15444)).